Here is a 334-residue protein sequence, read N- to C-terminus: D-fructose 1,6-bisphosphatase class 2/sedoheptulose 1,7-bisphosphatase (334 aa).

4 residues coordinate Mn(2+): aspartate 33, glutamate 57, aspartate 85, and glutamate 88. Substrate-binding positions include 88 to 90 (EGT), tyrosine 119, 164 to 166 (RAR), and 186 to 188 (DGD). Residue glutamate 213 coordinates Mn(2+).

It belongs to the FBPase class 2 family. As to quaternary structure, homotetramer. The cofactor is Mn(2+).

It catalyses the reaction beta-D-fructose 1,6-bisphosphate + H2O = beta-D-fructose 6-phosphate + phosphate. The catalysed reaction is D-sedoheptulose 1,7-bisphosphate + H2O = D-sedoheptulose 7-phosphate + phosphate. It functions in the pathway carbohydrate biosynthesis; Calvin cycle. Catalyzes the hydrolysis of fructose 1,6-bisphosphate (Fru 1,6-P2) and sedoheptulose 1,7-bisphosphate (Sed 1,7-P2) to fructose 6-phosphate and sedoheptulose 7-phosphate, respectively. This chain is D-fructose 1,6-bisphosphatase class 2/sedoheptulose 1,7-bisphosphatase, found in Synechococcus sp. (strain CC9902).